Here is a 305-residue protein sequence, read N- to C-terminus: Probable branched-chain-amino-acid aminotransferase (305 aa).

Lysine 156 is subject to N6-(pyridoxal phosphate)lysine.

It belongs to the class-IV pyridoxal-phosphate-dependent aminotransferase family. Requires pyridoxal 5'-phosphate as cofactor.

The catalysed reaction is L-leucine + 2-oxoglutarate = 4-methyl-2-oxopentanoate + L-glutamate. It carries out the reaction L-isoleucine + 2-oxoglutarate = (S)-3-methyl-2-oxopentanoate + L-glutamate. It catalyses the reaction L-valine + 2-oxoglutarate = 3-methyl-2-oxobutanoate + L-glutamate. The protein operates within amino-acid biosynthesis; L-isoleucine biosynthesis; L-isoleucine from 2-oxobutanoate: step 4/4. It participates in amino-acid biosynthesis; L-leucine biosynthesis; L-leucine from 3-methyl-2-oxobutanoate: step 4/4. Its pathway is amino-acid biosynthesis; L-valine biosynthesis; L-valine from pyruvate: step 4/4. In terms of biological role, acts on leucine, isoleucine and valine. This chain is Probable branched-chain-amino-acid aminotransferase (ilvE), found in Synechocystis sp. (strain ATCC 27184 / PCC 6803 / Kazusa).